The following is a 346-amino-acid chain: Phenylalanine--tRNA ligase alpha subunit (346 aa).

Position 261 (glutamate 261) interacts with Mg(2+).

The protein belongs to the class-II aminoacyl-tRNA synthetase family. Phe-tRNA synthetase alpha subunit type 1 subfamily. In terms of assembly, tetramer of two alpha and two beta subunits. Requires Mg(2+) as cofactor.

It localises to the cytoplasm. It catalyses the reaction tRNA(Phe) + L-phenylalanine + ATP = L-phenylalanyl-tRNA(Phe) + AMP + diphosphate + H(+). This is Phenylalanine--tRNA ligase alpha subunit from Dehalococcoides mccartyi (strain ATCC BAA-2100 / JCM 16839 / KCTC 5957 / BAV1).